The primary structure comprises 456 residues: Putative F-box/LRR-repeat protein At5g02700 (456 aa).

In terms of domain architecture, F-box spans A26–T72. 5 LRR repeats span residues V126–L154, F177–T202, L206–Q224, L271–E300, and F330–T355.

This is Putative F-box/LRR-repeat protein At5g02700 from Arabidopsis thaliana (Mouse-ear cress).